A 256-amino-acid polypeptide reads, in one-letter code: 2,3,4,5-tetrahydropyridine-2,6-dicarboxylate N-acetyltransferase (256 aa).

This sequence belongs to the transferase hexapeptide repeat family. DapH subfamily.

The enzyme catalyses (S)-2,3,4,5-tetrahydrodipicolinate + acetyl-CoA + H2O = L-2-acetamido-6-oxoheptanedioate + CoA. It participates in amino-acid biosynthesis; L-lysine biosynthesis via DAP pathway; LL-2,6-diaminopimelate from (S)-tetrahydrodipicolinate (acetylase route): step 1/3. Functionally, catalyzes the transfer of an acetyl group from acetyl-CoA to tetrahydrodipicolinate. This Lactococcus lactis subsp. lactis (strain IL1403) (Streptococcus lactis) protein is 2,3,4,5-tetrahydropyridine-2,6-dicarboxylate N-acetyltransferase.